Reading from the N-terminus, the 149-residue chain is ATP synthase epsilon chain (149 aa).

Basic and acidic residues-rich tracts occupy residues 99 to 116 and 123 to 134; these read DVER…RLEE and RETHEAARDRAR. The disordered stretch occupies residues 99–149; the sequence is DVERAESAEERAKRRLEEGVQEEERETHEAARDRARNRLRVAMGKVGTRQS.

This sequence belongs to the ATPase epsilon chain family. In terms of assembly, F-type ATPases have 2 components, CF(1) - the catalytic core - and CF(0) - the membrane proton channel. CF(1) has five subunits: alpha(3), beta(3), gamma(1), delta(1), epsilon(1). CF(0) has three main subunits: a, b and c.

The protein resides in the cell inner membrane. Produces ATP from ADP in the presence of a proton gradient across the membrane. The chain is ATP synthase epsilon chain from Salinibacter ruber (strain DSM 13855 / M31).